The sequence spans 730 residues: Cyclin-T2 (730 aa).

Residues 1-300 (MASGRGASSR…SVTGVPTNPS (300 aa)) are interaction with MDFIC and MDFI. Residues 12-147 (FFTREQLENT…IMLQTLGFEI (136 aa)) form the Cyclin N-terminal domain. The segment at 250–300 (RLKKIRNWRANQAARKPKVDGQVSETPLLGSSLVQNSILVDSVTGVPTNPS) is interaction with POLR2A. Polar residues-rich tracts occupy residues 341 to 350 (TSYGLSSHQE) and 360 to 389 (TEQL…SISL). Residues 341–430 (TSYGLSSHQE…GPISTTPGII (90 aa)) are disordered. Positions 398 to 412 (DKISDHSSVKQEYTH) are enriched in basic and acidic residues. Lysine 407 is covalently cross-linked (Glycyl lysine isopeptide (Lys-Gly) (interchain with G-Cter in SUMO2)). Serine 480 carries the post-translational modification Phosphoserine. The segment at 497–652 (DKKEKSGSLK…SSSSSSSSVK (156 aa)) is disordered. Composition is skewed to basic and acidic residues over residues 517-543 (SASK…EGSG) and 552-565 (ISRD…EHPS). The span at 566 to 578 (SRHHTSSHKHSHS) shows a compositional bias: basic residues. Positions 579–588 (HSGSSSGGSK) are enriched in low complexity. A Phosphoserine modification is found at serine 601. Composition is skewed to low complexity over residues 606–616 (SSDGISSSSSS) and 637–652 (SSKS…SSVK).

Belongs to the cyclin family. Cyclin C subfamily. Interacts with CDK9 to form P-TEFb. Interacts with POLR2A (via the C-terminal domain (CTD)); mediates transcriptional activity. Interacts with HEXIM1; mediates formation of a tripartite complex with KPNA2. Interacts with HEXIM2. Interacts with PKN1; enhances MYOD1-dependent transcription. P-TEFB complex interacts with RB1; promotes phosphorylation of RB1. P-TEFB complex interacts with MYOD1; promotes the transcriptional activity of MYOD1 through its CDK9-mediated phosphorylation. Interacts with MDFI and MDFIC. Interacts with MON1B; down-regulates CCNT2-mediated activation of viral promoters during herpes simplex virus 1/HHV-1 infection. As to quaternary structure, (Microbial infection) Interacts with HIV-2 and SIV Tat. Does not bind efficiently to the transactivation domain of the HIV-1 Tat. As to expression, ubiquitously expressed.

Its subcellular location is the cytoplasm. The protein resides in the perinuclear region. The protein localises to the nucleus. Functionally, regulatory subunit of the cyclin-dependent kinase pair (CDK9/cyclin T) complex, also called positive transcription elongation factor B (P-TEFB), which is proposed to facilitate the transition from abortive to production elongation by phosphorylating the CTD (carboxy-terminal domain) of the large subunit of RNA polymerase II (RNAP II). The activity of this complex is regulated by binding with 7SK snRNA. Plays a role during muscle differentiation; P-TEFB complex interacts with MYOD1; this tripartite complex promotes the transcriptional activity of MYOD1 through its CDK9-mediated phosphorylation and binds the chromatin of promoters and enhancers of muscle-specific genes; this event correlates with hyperphosphorylation of the CTD domain of RNA pol II. In addition, enhances MYOD1-dependent transcription through interaction with PKN1. Involved in early embryo development. In terms of biological role, (Microbial infection) Promotes transcriptional activation of early and late herpes simplex virus 1/HHV-1 promoters. This Homo sapiens (Human) protein is Cyclin-T2.